We begin with the raw amino-acid sequence, 223 residues long: Type 3 secretion system stator protein (223 aa).

This sequence belongs to the SctL stator family. In terms of assembly, the core secretion machinery of the T3SS is composed of approximately 20 different proteins, including cytoplasmic components, a base, an export apparatus and a needle. This subunit is part of the cytosolic complex. Interacts directly with YscN/SctN (T3SS ATPase) and YscQ/SctQ (the major sorting platform component). Forms homodimers.

It localises to the cytoplasm. In terms of biological role, component of the type III secretion system (T3SS), also called injectisome, which is used to inject bacterial effector proteins into eukaryotic host cells. Acts as a regulator of the YscN/SctN ATPase activity. Overexpression of YscL/SctL abolishes type III secretion and down-regulates the expression of secretion apparatus components. The chain is Type 3 secretion system stator protein from Yersinia enterocolitica.